Consider the following 52-residue polypeptide: Large ribosomal subunit protein bL32c (52 aa).

It belongs to the bacterial ribosomal protein bL32 family.

It is found in the plastid. The protein localises to the chloroplast. The chain is Large ribosomal subunit protein bL32c from Arabis hirsuta (Hairy rock-cress).